The sequence spans 179 residues: Large ribosomal subunit protein uL5 (179 aa).

The protein belongs to the universal ribosomal protein uL5 family. As to quaternary structure, part of the 50S ribosomal subunit; part of the 5S rRNA/L5/L18/L25 subcomplex. Contacts the 5S rRNA and the P site tRNA. Forms a bridge to the 30S subunit in the 70S ribosome.

This is one of the proteins that bind and probably mediate the attachment of the 5S RNA into the large ribosomal subunit, where it forms part of the central protuberance. In the 70S ribosome it contacts protein S13 of the 30S subunit (bridge B1b), connecting the 2 subunits; this bridge is implicated in subunit movement. Contacts the P site tRNA; the 5S rRNA and some of its associated proteins might help stabilize positioning of ribosome-bound tRNAs. This chain is Large ribosomal subunit protein uL5, found in Pseudomonas putida (strain ATCC 700007 / DSM 6899 / JCM 31910 / BCRC 17059 / LMG 24140 / F1).